Reading from the N-terminus, the 391-residue chain is Zinc finger protein DPF3 (391 aa).

Acidic residues predominate over residues 152–165 (ENGDGFHDDEDFEV). Disordered stretches follow at residues 152–200 (ENGD…PYVC) and 236–266 (LAEE…QKAP). Basic residues predominate over residues 169 to 183 (KRKHRNKGRGRGSGR). The C2H2-type zinc finger occupies 198 to 235 (YVCDNRYKQKHNSKTADSVCGKRYKNRPGLSYHYAHTH). PHD-type zinc fingers lie at residues 273–333 (NDYC…CKSC) and 330–380 (CKSC…CQNL).

As to quaternary structure, component of the BAF complex. Interacts with acetylated histones H3 and H4. Component of neuron-specific chromatin remodeling complex (nBAF complex), a subfamily of ATP-dependent SWI/SNF chromatin remodeling complexes. Expressed in the heart and somites.

The protein localises to the nucleus. Muscle-specific component of the BAF complex, a multiprotein complex involved in transcriptional activation and repression of select genes by chromatin remodeling (alteration of DNA-nucleosome topology). Specifically binds acetylated lysines on histone 3 and 4. In the complex, it acts as a tissue-specific anchor between histone acetylations and methylations and chromatin remodeling. Belongs to the neuron-specific chromatin remodeling complex (nBAF complex) and may play a role in neural development. Plays an essential role in heart and skeletal muscle development. The protein is Zinc finger protein DPF3 (dpf3) of Danio rerio (Zebrafish).